The primary structure comprises 445 residues: RING finger and transmembrane domain-containing protein 2 (445 aa).

Residues 1–183 (MWLLAAHQVL…LLAKLCFQHK (183 aa)) are Extracellular-facing. The interval 12-41 (KMQRRHSSNTDNIPPERSRSQALSPEASVD) is disordered. Residues 184–203 (LGIAVCIGMASTFAYANSTL) form a helical membrane-spanning segment. Topologically, residues 204–215 (REQVSLKEKRSV) are cytoplasmic. A helical membrane pass occupies residues 216–236 (LVILWILAFLAGNTMYVLYTF). The Extracellular segment spans residues 237-256 (SSQQLYSSLIFLKPNLETLD). The chain crosses the membrane as a helical span at residues 257–277 (FFDLLWIVGIADFVLKYITIA). The Cytoplasmic segment spans residues 278–330 (LKCLIVALPKIILAVKSKGKFYLVIEELSQLFRSLVPIQLWYKYIMGDDSSNS). Residues 331–351 (YFLGGVLIVLYSLCKSFDICG) traverse the membrane as a helical segment. Residues 352–445 (RVGGLRKALK…GATSAHLQVY (94 aa)) are Extracellular-facing. An RING-type zinc finger spans residues 385-423 (CAICQAEFRDPMILLCQHVFCEECLCLWLDRERTCPLCR).

It is found in the membrane. Its function is as follows. E3 ubiquitin-protein ligase that negatively regulates IL3-dependent cellular responses through IL3RA ubiquitination and degradation by the proteasome, having an anti-inflammatory effect. This Mus musculus (Mouse) protein is RING finger and transmembrane domain-containing protein 2 (Rnft2).